A 78-amino-acid polypeptide reads, in one-letter code: Large ribosomal subunit protein bL28 (78 aa).

This sequence belongs to the bacterial ribosomal protein bL28 family.

This chain is Large ribosomal subunit protein bL28, found in Hamiltonella defensa subsp. Acyrthosiphon pisum (strain 5AT).